We begin with the raw amino-acid sequence, 241 residues long: Lysoplasmalogenase TMEM86A (241 aa).

Residues Met-1–Pro-13 are Cytoplasmic-facing. The chain crosses the membrane as a helical span at residues Lys-14–Leu-30. The Extracellular segment spans residues Pro-31 to Ser-36. Residues Trp-37–Val-59 traverse the membrane as a helical segment. Over Arg-60–Ser-67 the chain is Cytoplasmic. The chain crosses the membrane as a helical span at residues Ala-68–Trp-87. The Extracellular segment spans residues Gln-88–Gly-96. A helical membrane pass occupies residues Leu-97–Met-113. The Cytoplasmic segment spans residues Arg-114 to Arg-119. A helical transmembrane segment spans residues Thr-120–Tyr-136. At Pro-137–Ala-142 the chain is on the extracellular side. A helical transmembrane segment spans residues Phe-143–Trp-159. Residues Arg-160–Glu-176 are Cytoplasmic-facing. Residues Leu-177–Leu-195 form a helical membrane-spanning segment. Over Asn-196–Arg-206 the chain is Extracellular. A helical transmembrane segment spans residues Ala-207–Val-225. Over Glu-226 to Asp-241 the chain is Cytoplasmic.

This sequence belongs to the TMEM86 family. As to expression, highly expressed in the jejunum, white adipose tissue, kidney and macrophages.

The protein resides in the endoplasmic reticulum membrane. The enzyme catalyses a 1-O-(1Z-alkenyl)-sn-glycero-3-phosphocholine + H2O = a 2,3-saturated aldehyde + sn-glycerol 3-phosphocholine. It catalyses the reaction a 1-O-(1Z-alkenyl)-sn-glycero-3-phosphoethanolamine + H2O = a 2,3-saturated aldehyde + sn-glycero-3-phosphoethanolamine. Catalyzes the hydrolysis of the vinyl ether bond of choline or ethanolamine lysoplasmalogens, forming fatty aldehyde and glycerophosphocholine or glycerophosphoethanolamine, respectively and is specific for the sn-2-deacylated (lyso) form of plasmalogen. Plays an important role in lysoplasmalogen metabolism in the adipocyte tissue and macrophages. The chain is Lysoplasmalogenase TMEM86A (Tmem86a) from Mus musculus (Mouse).